A 279-amino-acid chain; its full sequence is Ribosomal RNA small subunit methyltransferase I (279 aa).

This sequence belongs to the methyltransferase superfamily. RsmI family.

It localises to the cytoplasm. The catalysed reaction is cytidine(1402) in 16S rRNA + S-adenosyl-L-methionine = 2'-O-methylcytidine(1402) in 16S rRNA + S-adenosyl-L-homocysteine + H(+). Its function is as follows. Catalyzes the 2'-O-methylation of the ribose of cytidine 1402 (C1402) in 16S rRNA. The chain is Ribosomal RNA small subunit methyltransferase I from Synechocystis sp. (strain ATCC 27184 / PCC 6803 / Kazusa).